We begin with the raw amino-acid sequence, 406 residues long: Protein phosphatase 2C (406 aa).

Residues 23–274 form the PPM-type phosphatase domain; the sequence is RCGSNCVNGY…DNISCMIVQF (252 aa). Mn(2+)-binding residues include aspartate 55, glycine 56, aspartate 221, and aspartate 265.

It belongs to the PP2C family. Monomer. Requires Mg(2+) as cofactor. Mn(2+) is required as a cofactor.

The enzyme catalyses O-phospho-L-seryl-[protein] + H2O = L-seryl-[protein] + phosphate. It carries out the reaction O-phospho-L-threonyl-[protein] + H2O = L-threonyl-[protein] + phosphate. Its function is as follows. Enzyme with a broad specificity. This chain is Protein phosphatase 2C, found in Leishmania chagasi.